Reading from the N-terminus, the 263-residue chain is Pyrrolysine synthase (263 aa).

Residues Leu-8, Val-57, Ile-64, and Ala-107 each coordinate L-pyrrolysine. Positions 155, 156, 175, 210, 228, 230, and 249 each coordinate NAD(+).

Belongs to the PylD family.

The enzyme catalyses (3R)-3-methyl-D-ornithyl-N(6)-L-lysine + NAD(+) = L-pyrrolysine + NH4(+) + NADH + 2 H(+). Its pathway is amino-acid biosynthesis; L-pyrrolysine biosynthesis. Catalyzes the ultimate step of the pyrrolysine biosynthesis pathway by converting the isopeptide (3R)-3-methyl-D-ornithyl-N(6)-L-lysine to the 22nd proteinogenic amino acid. Is able to use surrogate substrates such as (3R)-D-ornithyl-N(6)-L-lysine in vitro. The chain is Pyrrolysine synthase from Methanosarcina barkeri (strain Fusaro / DSM 804).